The primary structure comprises 204 residues: Venom allergen 5 (204 aa).

Intrachain disulfides connect cysteine 4/cysteine 17, cysteine 8/cysteine 101, cysteine 26/cysteine 94, and cysteine 170/cysteine 187. The SCP domain maps to leucine 45–tyrosine 189.

Belongs to the CRISP family. Venom allergen 5-like subfamily. Expressed by the venom gland.

The protein resides in the secreted. In Vespula maculifrons (Eastern yellow jacket), this protein is Venom allergen 5.